A 953-amino-acid chain; its full sequence is Isoleucine--tRNA ligase (953 aa).

The 'HIGH' region signature appears at 61-71 (PYANGALHIGH). Glutamate 564 provides a ligand contact to L-isoleucyl-5'-AMP. Residues 605-609 (KMSKS) carry the 'KMSKS' region motif. Residue lysine 608 coordinates ATP. Zn(2+) contacts are provided by cysteine 922, cysteine 925, cysteine 942, and cysteine 945.

The protein belongs to the class-I aminoacyl-tRNA synthetase family. IleS type 1 subfamily. In terms of assembly, monomer. Requires Zn(2+) as cofactor.

The protein resides in the cytoplasm. The catalysed reaction is tRNA(Ile) + L-isoleucine + ATP = L-isoleucyl-tRNA(Ile) + AMP + diphosphate. Catalyzes the attachment of isoleucine to tRNA(Ile). As IleRS can inadvertently accommodate and process structurally similar amino acids such as valine, to avoid such errors it has two additional distinct tRNA(Ile)-dependent editing activities. One activity is designated as 'pretransfer' editing and involves the hydrolysis of activated Val-AMP. The other activity is designated 'posttransfer' editing and involves deacylation of mischarged Val-tRNA(Ile). This is Isoleucine--tRNA ligase from Thermosynechococcus vestitus (strain NIES-2133 / IAM M-273 / BP-1).